We begin with the raw amino-acid sequence, 364 residues long: Methylthioribose-1-phosphate isomerase (364 aa).

Aspartate 254 serves as the catalytic Proton donor.

The protein belongs to the eIF-2B alpha/beta/delta subunits family. MtnA subfamily.

It localises to the cytoplasm. Its subcellular location is the nucleus. The catalysed reaction is 5-(methylsulfanyl)-alpha-D-ribose 1-phosphate = 5-(methylsulfanyl)-D-ribulose 1-phosphate. It participates in amino-acid biosynthesis; L-methionine biosynthesis via salvage pathway; L-methionine from S-methyl-5-thio-alpha-D-ribose 1-phosphate: step 1/6. Functionally, catalyzes the interconversion of methylthioribose-1-phosphate (MTR-1-P) into methylthioribulose-1-phosphate (MTRu-1-P). This is Methylthioribose-1-phosphate isomerase from Drosophila ananassae (Fruit fly).